The chain runs to 236 residues: MLPDCLSAEGELRCRRLLAGATARLRARPASAAVLVPLCSVRGVPALLYTLRSSRLTGRHKGDVSFPGGKCDPADQDVVHTALRETREELGLAVPEEHVWGLLRPVYDPQKATVVPVLAGVGPLDPQSLRPNSEEVDEVFALPLAHLLQTQNQGYTHFCRGGHFRYTLPVFLHGPHRVWGLTAVITEFALQLLAPGTYQPRLAGLTCSGAEGLARPKQPLASPCQASSTPGLNKGL.

Residues 25-172 (LRARPASAAV…HFRYTLPVFL (148 aa)) form the Nudix hydrolase domain. Position 70 is an N6-succinyllysine (Lys70). The short motif at 70–91 (KCDPADQDVVHTALRETREELG) is the Nudix box element. Mg(2+) is bound by residues Glu85 and Glu89.

The protein belongs to the Nudix hydrolase family. As to quaternary structure, monomer. It depends on Mg(2+) as a cofactor. Mn(2+) is required as a cofactor.

Its subcellular location is the mitochondrion. It carries out the reaction an acyl-CoA + H2O = an acyl-4'-phosphopantetheine + adenosine 3',5'-bisphosphate + 2 H(+). It catalyses the reaction CoA + H2O = (R)-4'-phosphopantetheine + adenosine 3',5'-bisphosphate + 2 H(+). The catalysed reaction is acetyl-CoA + H2O = S-acetyl-4'-phosphopantetheine + adenosine 3',5'-bisphosphate + 2 H(+). The enzyme catalyses butanoyl-CoA + H2O = S-butanoyl-4'-phosphopantetheine + adenosine 3',5'-bisphosphate + 2 H(+). It carries out the reaction hexanoyl-CoA + H2O = hexanoyl-4'-phosphopantetheine + adenosine 3',5'-bisphosphate + 2 H(+). It catalyses the reaction octanoyl-CoA + H2O = S-octanoyl-4'-phosphopantetheine + adenosine 3',5'-bisphosphate + 2 H(+). The catalysed reaction is propanoyl-CoA + H2O = propanoyl-4'-phosphopantetheine + adenosine 3',5'-bisphosphate + 2 H(+). The enzyme catalyses malonyl-CoA + H2O = malonyl-4'-phosphopantetheine + adenosine 3',5'-bisphosphate + 2 H(+). It carries out the reaction succinyl-CoA + H2O = succinyl-4'-phosphopantetheine + adenosine 3',5'-bisphosphate + 2 H(+). It catalyses the reaction a 5'-end CoA-ribonucleoside in mRNA + H2O = a 5'-end phospho-adenosine-phospho-ribonucleoside in mRNA + (R)-4'-phosphopantetheine + 2 H(+). Acyl-CoA diphosphatase that mediates the hydrolysis of a wide range of CoA and CoA esters yielding 3',5'-ADP and the corresponding 4'-phosphopantetheine derivative as products. Hydrolyzes short- and medium-chain acyl-CoAs, exhibiting the highest activity toward free CoA, hexanoyl-CoA, and octanoyl-CoA and the lowest activity against acetyl-CoA. Exhibits decapping activity towards dpCoA-capped RNAs in vitro. This chain is Mitochondrial coenzyme A diphosphatase NUDT8 (NUDT8), found in Homo sapiens (Human).